The primary structure comprises 250 residues: 5'-nucleotidase SurE (250 aa).

A divalent metal cation is bound by residues Asp8, Asp9, Ser40, and Asn92.

It belongs to the SurE nucleotidase family. Requires a divalent metal cation as cofactor.

It localises to the cytoplasm. It carries out the reaction a ribonucleoside 5'-phosphate + H2O = a ribonucleoside + phosphate. Functionally, nucleotidase that shows phosphatase activity on nucleoside 5'-monophosphates. The polypeptide is 5'-nucleotidase SurE (Dichelobacter nodosus (strain VCS1703A)).